The primary structure comprises 878 residues: Leucine--tRNA ligase (878 aa).

Positions P43–H53 match the 'HIGH' region motif. Positions K630–S634 match the 'KMSKS' region motif. Position 633 (K633) interacts with ATP.

Belongs to the class-I aminoacyl-tRNA synthetase family.

The protein resides in the cytoplasm. The catalysed reaction is tRNA(Leu) + L-leucine + ATP = L-leucyl-tRNA(Leu) + AMP + diphosphate. In Rhodopseudomonas palustris (strain BisB5), this protein is Leucine--tRNA ligase.